Consider the following 207-residue polypeptide: Fibroblast growth factor 18 (207 aa).

An N-terminal signal peptide occupies residues 1–27; the sequence is MYSAPSACTCLCLHFLLLCFQVQVLVA. The N-linked (GlcNAc...) asparagine glycan is linked to Asn39. A disulfide bond links Cys109 and Cys127. Asn137 is a glycosylation site (N-linked (GlcNAc...) asparagine). The interval 157 to 186 is disordered; it reads GRPRKGPKTRENQQDVHFMKRYPKGQPELQ. A compositionally biased stretch (basic and acidic residues) spans 164 to 174; the sequence is KTRENQQDVHF.

This sequence belongs to the heparin-binding growth factors family. As to quaternary structure, interacts with FGFR3 and FGFR4.

Its subcellular location is the secreted. Its function is as follows. Plays an important role in the regulation of cell proliferation, cell differentiation and cell migration. Required for normal ossification and bone development. Stimulates hepatic and intestinal proliferation. In Homo sapiens (Human), this protein is Fibroblast growth factor 18 (FGF18).